A 333-amino-acid chain; its full sequence is Tetraacyldisaccharide 4'-kinase (333 aa).

Residue 55–62 (SVGGNGKT) participates in ATP binding.

This sequence belongs to the LpxK family.

The catalysed reaction is a lipid A disaccharide + ATP = a lipid IVA + ADP + H(+). The protein operates within glycolipid biosynthesis; lipid IV(A) biosynthesis; lipid IV(A) from (3R)-3-hydroxytetradecanoyl-[acyl-carrier-protein] and UDP-N-acetyl-alpha-D-glucosamine: step 6/6. In terms of biological role, transfers the gamma-phosphate of ATP to the 4'-position of a tetraacyldisaccharide 1-phosphate intermediate (termed DS-1-P) to form tetraacyldisaccharide 1,4'-bis-phosphate (lipid IVA). In Aeromonas hydrophila subsp. hydrophila (strain ATCC 7966 / DSM 30187 / BCRC 13018 / CCUG 14551 / JCM 1027 / KCTC 2358 / NCIMB 9240 / NCTC 8049), this protein is Tetraacyldisaccharide 4'-kinase.